The primary structure comprises 529 residues: Phenylalanine N-monooxygenase (529 aa).

The chain crosses the membrane as a helical span at residues 1–21 (MLDSTPMLAFIIGLLLLALTM). Residue Cys-467 participates in heme binding.

The protein belongs to the cytochrome P450 family. The cofactor is heme.

It localises to the endoplasmic reticulum membrane. The catalysed reaction is L-phenylalanine + 2 reduced [NADPH--hemoprotein reductase] + 2 O2 = (E)-phenylacetaldehyde oxime + 2 oxidized [NADPH--hemoprotein reductase] + CO2 + 3 H2O + 2 H(+). The protein operates within secondary metabolite biosynthesis; phenylglucosinolate biosynthesis. Its function is as follows. Converts L-phenylalanine into phenylacetaldoxime, the precursor of benzylglucosinolate (glucotropeolin). The protein is Phenylalanine N-monooxygenase (CYP79A2) of Arabidopsis thaliana (Mouse-ear cress).